Consider the following 785-residue polypeptide: Endonuclease MutS2 (785 aa).

ATP is bound at residue 335–342 (GPNTGGKT). Residues 710–785 (LDLRGERYED…GNGVTIVEFK (76 aa)) form the Smr domain.

This sequence belongs to the DNA mismatch repair MutS family. MutS2 subfamily. As to quaternary structure, homodimer. Binds to stalled ribosomes, contacting rRNA.

Endonuclease that is involved in the suppression of homologous recombination and thus may have a key role in the control of bacterial genetic diversity. Functionally, acts as a ribosome collision sensor, splitting the ribosome into its 2 subunits. Detects stalled/collided 70S ribosomes which it binds and splits by an ATP-hydrolysis driven conformational change. Acts upstream of the ribosome quality control system (RQC), a ribosome-associated complex that mediates the extraction of incompletely synthesized nascent chains from stalled ribosomes and their subsequent degradation. Probably generates substrates for RQC. The protein is Endonuclease MutS2 of Listeria monocytogenes serotype 4b (strain F2365).